The sequence spans 404 residues: MMKSIILIVLDGLGDRPGSDLQNRTPLQAAFRPNLNWLASHGINGIMHPISPGIRCGSDTSHMSLLGYDPKVYYPGRGPFEALGLGMDIRPGDLAFRANFATNRDGVIVDRRAGRENKGNEELADAISLDMGEYSFRVKSGVEHRAALVVSGPDLSDMIGDSDPHREGLPPEKIRPTDPSGDRTAEVMNAYLEEARRILSDHRVNKERVKNGRLPGNELLVRSAGKVPAIPSFTEKNRMKGACVVGSPWLKGLCRLLRMDVFDVPGATGTVGSNYRGKIEKAVDLTSSHDFVLVNIKATDVAGHDGNYPLKRDVIEDIDRAMEPLKSIGDHAVICVTGDHSTPCSFKDHSGDPVPIVFYTDGVMNDGVHLFDELSSASGSLRITSYNVMDILMQLAGRSDKFGS.

The interval 155–183 (LSDMIGDSDPHREGLPPEKIRPTDPSGDR) is disordered. Over residues 162–183 (SDPHREGLPPEKIRPTDPSGDR) the composition is skewed to basic and acidic residues.

Belongs to the BPG-independent phosphoglycerate mutase family. A-PGAM subfamily.

It catalyses the reaction (2R)-2-phosphoglycerate = (2R)-3-phosphoglycerate. The protein operates within carbohydrate degradation; glycolysis; pyruvate from D-glyceraldehyde 3-phosphate: step 3/5. Catalyzes the interconversion of 2-phosphoglycerate and 3-phosphoglycerate. The polypeptide is 2,3-bisphosphoglycerate-independent phosphoglycerate mutase (Thermoplasma acidophilum (strain ATCC 25905 / DSM 1728 / JCM 9062 / NBRC 15155 / AMRC-C165)).